The chain runs to 92 residues: Small ribosomal subunit protein bS18 (92 aa).

Residues 1 to 27 (MTQQSNSADRKPRGKGPKRPRKPKVDP) form a disordered region. A compositionally biased stretch (basic residues) spans 12–22 (PRGKGPKRPRK).

Belongs to the bacterial ribosomal protein bS18 family. Part of the 30S ribosomal subunit. Forms a tight heterodimer with protein bS6.

Functionally, binds as a heterodimer with protein bS6 to the central domain of the 16S rRNA, where it helps stabilize the platform of the 30S subunit. This chain is Small ribosomal subunit protein bS18, found in Deinococcus deserti (strain DSM 17065 / CIP 109153 / LMG 22923 / VCD115).